Consider the following 190-residue polypeptide: Elongation factor P-like protein (190 aa).

The protein belongs to the elongation factor P family.

The chain is Elongation factor P-like protein from Marinomonas sp. (strain MWYL1).